A 362-amino-acid chain; its full sequence is UDP-N-acetylglucosamine--N-acetylmuramyl-(pentapeptide) pyrophosphoryl-undecaprenol N-acetylglucosamine transferase (362 aa).

UDP-N-acetyl-alpha-D-glucosamine contacts are provided by residues 15 to 17 (TGG), N127, R165, S191, I247, 266 to 271 (ALTVSE), and Q292.

Belongs to the glycosyltransferase 28 family. MurG subfamily.

It is found in the cell inner membrane. The enzyme catalyses di-trans,octa-cis-undecaprenyl diphospho-N-acetyl-alpha-D-muramoyl-L-alanyl-D-glutamyl-meso-2,6-diaminopimeloyl-D-alanyl-D-alanine + UDP-N-acetyl-alpha-D-glucosamine = di-trans,octa-cis-undecaprenyl diphospho-[N-acetyl-alpha-D-glucosaminyl-(1-&gt;4)]-N-acetyl-alpha-D-muramoyl-L-alanyl-D-glutamyl-meso-2,6-diaminopimeloyl-D-alanyl-D-alanine + UDP + H(+). It participates in cell wall biogenesis; peptidoglycan biosynthesis. Its function is as follows. Cell wall formation. Catalyzes the transfer of a GlcNAc subunit on undecaprenyl-pyrophosphoryl-MurNAc-pentapeptide (lipid intermediate I) to form undecaprenyl-pyrophosphoryl-MurNAc-(pentapeptide)GlcNAc (lipid intermediate II). The polypeptide is UDP-N-acetylglucosamine--N-acetylmuramyl-(pentapeptide) pyrophosphoryl-undecaprenol N-acetylglucosamine transferase (Shewanella baltica (strain OS155 / ATCC BAA-1091)).